The chain runs to 496 residues: MQLHDFGFINYAVLFGYLAAMLLVGVYFSKRQKTADDYFRGGGRVPGWAAGVSVFATTLSSITFMSIPAKAYTSDWTFIIGQYLAIAILPLVFYFYIPFFRKLKITSAYEYLEARFDVRSRLFASLSFMLFHIGRVAIITYLTVLALRPFMGIDPVVLIVLISLLCIIYTWMGGIEGVIWTDVIQGLLLSGGAVLIFIMICFKVDGGISEIFTTTAQADKFFPTTQWRWSWTDSTIPVLMIGFLFANIQQFTASQDVVQRYIVTDSIKETKRTLITNAKLVAIIPIFFFAIGSALFVYYQQNPSLLPAGFNTGGILPLFIVTEMPIGIAGLIIAAIFAAAQSSISSSLNSISSCFNSDIYTRLSKSSPSPEQKMKVAKLVIIVAGIFSSLAAIWLVLSDEAEIWDAFNSLIGLMGGPMTGLFMLGIFVKRANAGSAVVGIIVSIIAVLAARYGSDLNFFFYGVIGSMSVVIAGTITAPLFAPAKQLSLDDSETSEN.

The Periplasmic segment spans residues 1–7 (MQLHDFG). Residues 8 to 29 (FINYAVLFGYLAAMLLVGVYFS) traverse the membrane as a helical segment. Over 30–46 (KRQKTADDYFRGGGRVP) the chain is Cytoplasmic. The chain crosses the membrane as a helical span at residues 47 to 59 (GWAAGVSVFATTL). Residue Ala56 coordinates Na(+). Thr58 serves as a coordination point for N-acetyl-alpha-neuraminate. Residue Leu59 coordinates Na(+). Residues Ser60, Thr63, and Gln82 each contribute to the N-acetyl-alpha-neuraminate site. At 60-76 (SSITFMSIPAKAYTSDW) the chain is on the periplasmic side. A helical transmembrane segment spans residues 77-92 (TFIIGQYLAIAILPLV). At 93–116 (FYFYIPFFRKLKITSAYEYLEARF) the chain is on the cytoplasmic side. The chain crosses the membrane as a helical span at residues 117-144 (DVRSRLFASLSFMLFHIGRVAIITYLTV). Arg135 is a binding site for N-acetyl-alpha-neuraminate. At 145 to 154 (LALRPFMGID) the chain is on the periplasmic side. A helical transmembrane segment spans residues 155–172 (PVVLIVLISLLCIIYTWM). At 173–174 (GG) the chain is on the cytoplasmic side. A helical membrane pass occupies residues 175–199 (IEGVIWTDVIQGLLLSGGAVLIFIM). Asp182 contacts Na(+). Residues 200-235 (ICFKVDGGISEIFTTTAQADKFFPTTQWRWSWTDST) are Periplasmic-facing. Residues 236–252 (IPVLMIGFLFANIQQFT) form a helical membrane-spanning segment. Over 253 to 272 (ASQDVVQRYIVTDSIKETKR) the chain is Cytoplasmic. The chain crosses the membrane as a helical span at residues 273-292 (TLITNAKLVAIIPIFFFAIG). At 293–325 (SALFVYYQQNPSLLPAGFNTGGILPLFIVTEMP) the chain is on the periplasmic side. A helical membrane pass occupies residues 326–356 (IGIAGLIIAAIFAAAQSSISSSLNSISSCFN). Na(+) is bound by residues Ala339, Ser342, Ser343, Ser345, and Ser346. Topologically, residues 357–374 (SDIYTRLSKSSPSPEQKM) are cytoplasmic. A helical transmembrane segment spans residues 375-396 (KVAKLVIIVAGIFSSLAAIWLV). Residues 397–403 (LSDEAEI) are Periplasmic-facing. The chain crosses the membrane as a helical span at residues 404–427 (WDAFNSLIGLMGGPMTGLFMLGIF). Over 428 to 432 (VKRAN) the chain is Cytoplasmic. The chain crosses the membrane as a helical span at residues 433–453 (AGSAVVGIIVSIIAVLAARYG). The Periplasmic segment spans residues 454–457 (SDLN). The helical transmembrane segment at 458–479 (FFFYGVIGSMSVVIAGTITAPL) threads the bilayer. The Cytoplasmic portion of the chain corresponds to 480–496 (FAPAKQLSLDDSETSEN).

This sequence belongs to the sodium:solute symporter (SSF) (TC 2.A.21) family.

It localises to the cell inner membrane. It carries out the reaction N-acetyl-alpha-neuraminate(out) + 2 Na(+)(out) = N-acetyl-alpha-neuraminate(in) + 2 Na(+)(in). Its activity is regulated as follows. Both Na(+) sites regulate Neu5Ac transport. The binding energy of the second Na(+) ion may be used to allosterically stabilize the substrate without directly coordinating it. In the absence of external Na(+), the rate is reduced by 78%. Functionally, symporter that uses the Na(+) gradient as the driving force for the uptake of the sialic acid N-acetylneuraminic acid (Neu5Ac). It allows the use of host-derived Neu5Ac as an energy source by P.mirabilis. Also binds N-glycolylneuraminic acid (Neu5Gc) and ketodeoxynonulosonic acid (KDN). Shows the highest affinity for Neu5Ac and Neu5Gc, which commonly occupy the terminal non-reducing position of mammalian cell surface glycoconjugates. This Proteus mirabilis (strain HI4320) protein is Sodium/sialic acid symporter SiaT.